We begin with the raw amino-acid sequence, 391 residues long: MSRFLICSFALVLLYPAGIDMYLVGLPRIAADLNASEAQLHIAFSVYLAGMAAAMLFAGKVADRSGRKPVAIPGAALFIIASVFCSLAETSTLFLAGRFLQGLGAGCCYVVAFAILRDTLDDRRRAKVLSLLNGITCIIPVLAPVLGHLIMLKFPWQSLFWTMAMMGIAVLMLSLFILKETRPASPAASDKPRENSESLLNRFFLSRVVITTLSVSVILTFVNTSPVLLMEIMGFERGEYATIMALTAGVSMTVSFSTPFALGIFKPRTLMITSQVLFLAAGITLAVSPSHAVSLFGITLICAGFSVGFGVAMSQALGPFSLRAGVASSTLGIAQVCGSSLWIWLAAVVGIGAWNMLIGILIACSIVSLLLIMFVAPGRPVAAHEEIHHHA.

The next 12 helical transmembrane spans lie at 4–24 (FLIC…MYLV), 42–62 (IAFS…GKVA), 69–89 (PVAI…SLAE), 93–113 (LFLA…VVAF), 131–151 (LLNG…HLIM), 158–178 (SLFW…LFIL), 203–222 (FFLS…LTFV), 245–265 (ALTA…LGIF), 269–289 (TLMI…AVSP), 293–313 (VSLF…GVAM), 331–351 (LGIA…VVGI), and 356–376 (MLIG…MFVA).

This sequence belongs to the major facilitator superfamily. DHA1 family. MdtL (TC 2.A.1.2.22) subfamily.

Its subcellular location is the cell inner membrane. In terms of biological role, confers resistance to chloramphenicol. This chain is Multidrug resistance protein MdtL, found in Escherichia coli O139:H28 (strain E24377A / ETEC).